A 340-amino-acid chain; its full sequence is Tryptophan--tRNA ligase (340 aa).

ATP-binding positions include 11 to 13 (RPT) and 19 to 20 (GH). The short motif at 12-20 (PTGKLHLGH) is the 'HIGH' region element. Residue Asp-140 participates in L-tryptophan binding. Residues 152–154 (GND), Leu-194, and 202–206 (KMSKS) each bind ATP. Residues 202–206 (KMSKS) carry the 'KMSKS' region motif.

Belongs to the class-I aminoacyl-tRNA synthetase family. As to quaternary structure, homodimer.

It is found in the cytoplasm. The enzyme catalyses tRNA(Trp) + L-tryptophan + ATP = L-tryptophyl-tRNA(Trp) + AMP + diphosphate + H(+). Functionally, catalyzes the attachment of tryptophan to tRNA(Trp). The sequence is that of Tryptophan--tRNA ligase from Streptococcus mutans serotype c (strain ATCC 700610 / UA159).